Reading from the N-terminus, the 33-residue chain is Glutaminase-asparaginase (33 aa).

Residues Asn-1–Lys-33 form the Asparaginase/glutaminase domain. The active-site Acyl-ester intermediate is Thr-10.

The protein belongs to the asparaginase 1 family. Homotetramer.

The protein localises to the periplasm. The catalysed reaction is L-glutamine + H2O = L-glutamate + NH4(+). The enzyme catalyses L-asparagine + H2O = L-aspartate + NH4(+). The polypeptide is Glutaminase-asparaginase (ansB) (Delftia acidovorans (Pseudomonas acidovorans)).